A 135-amino-acid polypeptide reads, in one-letter code: Small ribosomal subunit protein bS16 (135 aa).

Residues 106 to 135 (TERRQKRLVVKSRRRQAKKEAEGKAAGAEA) form a disordered region. Basic residues predominate over residues 109–122 (RQKRLVVKSRRRQA).

It belongs to the bacterial ribosomal protein bS16 family.

The protein is Small ribosomal subunit protein bS16 of Chlorobium phaeobacteroides (strain DSM 266 / SMG 266 / 2430).